Consider the following 116-residue polypeptide: MSEPQNGRGALFTGGLAAILASACCLGPLVLIALGFSGAWIGNLTVLEPYRPIFIGAALVALFFAWRRIYRPAQACKPGDVCAIPQVRATYKLIFWVVAALVLVALGFPYVMPFFY.

2 helical membrane passes run 16–36 and 46–66; these read LAAILASACCLGPLVLIALGF and VLEPYRPIFIGAALVALFFAW. Hg(2+) contacts are provided by C24 and C25. The Hg(2+) site is built by C76 and C82. The chain crosses the membrane as a helical span at residues 94–114; sequence IFWVVAALVLVALGFPYVMPF.

Belongs to the MerT family.

Its subcellular location is the cell inner membrane. Involved in mercury resistance. Probably transfers a mercuric ion from the periplasmic Hg(2+)-binding protein MerP to the cytoplasmic mercuric reductase MerA. This chain is Mercuric transport protein MerT, found in Serratia marcescens.